A 76-amino-acid chain; its full sequence is UPF0291 protein GWCH70_1239 (76 aa).

The tract at residues 54 to 76 is disordered; the sequence is VIDPNGNDVTPKKLKESQKSRLH. The span at 63–76 shows a compositional bias: basic and acidic residues; it reads TPKKLKESQKSRLH.

The protein belongs to the UPF0291 family.

It is found in the cytoplasm. The protein is UPF0291 protein GWCH70_1239 of Geobacillus sp. (strain WCH70).